The chain runs to 319 residues: Acetyl-coenzyme A carboxylase carboxyl transferase subunit alpha (319 aa).

In terms of domain architecture, CoA carboxyltransferase C-terminal spans Asn35 to Glu296.

The protein belongs to the AccA family. In terms of assembly, acetyl-CoA carboxylase is a heterohexamer composed of biotin carboxyl carrier protein (AccB), biotin carboxylase (AccC) and two subunits each of ACCase subunit alpha (AccA) and ACCase subunit beta (AccD).

Its subcellular location is the cytoplasm. The enzyme catalyses N(6)-carboxybiotinyl-L-lysyl-[protein] + acetyl-CoA = N(6)-biotinyl-L-lysyl-[protein] + malonyl-CoA. Its pathway is lipid metabolism; malonyl-CoA biosynthesis; malonyl-CoA from acetyl-CoA: step 1/1. Component of the acetyl coenzyme A carboxylase (ACC) complex. First, biotin carboxylase catalyzes the carboxylation of biotin on its carrier protein (BCCP) and then the CO(2) group is transferred by the carboxyltransferase to acetyl-CoA to form malonyl-CoA. The chain is Acetyl-coenzyme A carboxylase carboxyl transferase subunit alpha from Sodalis glossinidius (strain morsitans).